The sequence spans 61 residues: Large ribosomal subunit protein bL32 (61 aa).

A compositionally biased stretch (basic residues) spans 1 to 16 (MAVPKRKTSPSKRGMR). The segment at 1–41 (MAVPKRKTSPSKRGMRRSADALKASTYVEDKNSGELRRPHH) is disordered. Basic and acidic residues predominate over residues 28 to 41 (VEDKNSGELRRPHH).

It belongs to the bacterial ribosomal protein bL32 family.

The polypeptide is Large ribosomal subunit protein bL32 (Rhizobium rhizogenes (strain K84 / ATCC BAA-868) (Agrobacterium radiobacter)).